The chain runs to 321 residues: Torsin-2A (321 aa).

The first 26 residues, 1-26, serve as a signal peptide directing secretion; it reads MAAATRSCRPWGSLLGLIWLVSAAAA. An ATP-binding site is contributed by 93-100; the sequence is GWTGTGKS. Asn149 carries an N-linked (GlcNAc...) asparagine glycan.

This sequence belongs to the ClpA/ClpB family. Torsin subfamily. As to quaternary structure, homohexamer. Interacts with TOR1AIP1.

Its subcellular location is the endoplasmic reticulum lumen. This is Torsin-2A (TOR2A) from Bos taurus (Bovine).